The chain runs to 215 residues: Ras-related protein Rab-5B (215 aa).

Threonine 2 bears the N-acetylthreonine mark. GTP is bound by residues serine 29, alanine 30, glycine 32, lysine 33, serine 34, serine 35, histidine 46, glutamate 47, threonine 52, and glycine 78. Position 34 (serine 34) interacts with Mg(2+). 2 short sequence motifs (switch) span residues 44–56 (QFHE…IGAA) and 77–93 (AGQE…YRGA). Threonine 52 provides a ligand contact to Mg(2+). Serine 84 is modified (phosphoserine; by LRRK2). The GTP site is built by asparagine 133, lysine 134, aspartate 136, alanine 164, and lysine 165. The segment at 186–215 (PQNLGGAAGRSRGVDLHEQSQQNKSQCCSN) is disordered. Over residues 204-215 (QSQQNKSQCCSN) the composition is skewed to low complexity. Residues cysteine 212 and cysteine 213 are each lipidated (S-geranylgeranyl cysteine).

The protein belongs to the small GTPase superfamily. Rab family. As to quaternary structure, binds EEA1. Interacts with RIN2 and RIN3, which probably regulate its pathway, possibly by acting as GEFs. Interacts with GDI1, GDI2, CHML and CHM; phosphorylation at Ser-84 disrupts this interaction. Mg(2+) is required as a cofactor. In terms of processing, phosphorylation of Ser-84 in the switch II region by LRRK2 prevents the association of RAB regulatory proteins, including CHM, CHML and RAB GDP dissociation inhibitors GDI1 and GDI2. Post-translationally, (Microbial infection) Glycosylated on arginine residues by S.typhimurium protein Ssek3.

Its subcellular location is the cell membrane. It localises to the early endosome membrane. It is found in the melanosome. It catalyses the reaction GTP + H2O = GDP + phosphate + H(+). Regulated by guanine nucleotide exchange factors (GEFs) which promote the exchange of bound GDP for free GTP. Regulated by GTPase activating proteins (GAPs) which increase the GTP hydrolysis activity. Inhibited by GDP dissociation inhibitors (GDIs). Its function is as follows. The small GTPases Rab are key regulators of intracellular membrane trafficking, from the formation of transport vesicles to their fusion with membranes. Rabs cycle between an inactive GDP-bound form and an active GTP-bound form that is able to recruit to membranes different sets of downstream effectors directly responsible for vesicle formation, movement, tethering and fusion. In Homo sapiens (Human), this protein is Ras-related protein Rab-5B.